Here is a 602-residue protein sequence, read N- to C-terminus: Potassium voltage-gated channel subfamily A member 5 (602 aa).

A disordered region spans residues 1 to 107 (MEISLVPMEN…EDQAPQDSGS (107 aa)). A tetramerization domain region spans residues 1–202 (MEISLVPMEN…FYQLGDEAME (202 aa)). The Cytoplasmic portion of the chain corresponds to 1 to 238 (MEISLVPMEN…LIFEYPESSG (238 aa)). Residues 66 to 78 (PLPPMPQELPQPR) are compositionally biased toward pro residues. S81 is modified (phosphoserine; by CK2 and PKA). K212 is covalently cross-linked (Glycyl lysine isopeptide (Lys-Gly) (interchain with G-Cter in SUMO)). The helical transmembrane segment at 239 to 260 (SARAIAIVSVLVILISIITFCL) threads the bilayer. The Extracellular portion of the chain corresponds to 261–314 (ETLPEFRDERELLRHPPVPPQPPAPAPGANGSGSGVLSSGPTVAPLLPRTLADP). Residues 274–297 (RHPPVPPQPPAPAPGANGSGSGVL) form a disordered region. A compositionally biased stretch (pro residues) spans 276–286 (PPVPPQPPAPA). N290 is a glycosylation site (N-linked (GlcNAc...) asparagine). A helical membrane pass occupies residues 315–336 (FFIVETTCVIWFTFELLVRFFA). Residue C337 is the site of S-palmitoyl cysteine attachment. Residues 337–347 (CPSKAEFSRNI) lie on the Cytoplasmic side of the membrane. A helical membrane pass occupies residues 348 to 368 (MNIIDIVAIFPYFITLGTELA). Residues 369–384 (EQQPGGGGQNGQQAMS) are Extracellular-facing. A helical; Voltage-sensor membrane pass occupies residues 385–405 (LAILRVIRLVRVFRIFKLSRH). The Cytoplasmic segment spans residues 406–420 (SKGLQILGKTLQASM). Residues 407 to 420 (KGLQILGKTLQASM) form an S4-S5 linker region. A helical transmembrane segment spans residues 421 to 442 (RELGLLIFFLFIGVILFSSAVY). Residues 443–456 (FAEADNQGSHFSSI) lie on the Extracellular side of the membrane. Positions 457 to 468 (PDAFWWAVVTMT) form an intramembrane region, helical. Positions 469 to 474 (TVGYGD) match the Selectivity filter motif. An intramembrane segment occupies 469–476 (TVGYGDMR). The Extracellular portion of the chain corresponds to 477-483 (PITVGGK). Residues 484–512 (IVGSLCAIAGVLTIALPVPVIVSNFNYFY) traverse the membrane as a helical segment. Over 513-602 (HRETDHEEQA…CLDTSRETDL (90 aa)) the chain is Cytoplasmic. A Glycyl lysine isopeptide (Lys-Gly) (interchain with G-Cter in SUMO) cross-link involves residue K525. Phosphoserine; by PKA occurs at positions 535, 546, and 569. A PDZ-binding motif is present at residues 600–602 (TDL).

This sequence belongs to the potassium channel family. A (Shaker) (TC 1.A.1.2) subfamily. Kv1.5/KCNA5 sub-subfamily. In terms of assembly, homotetramer and heterotetramer of potassium channel proteins. Interacts with DLG1, which enhances channel currents. Forms a ternary complex with DLG1 and CAV3. Interacts with KCNAB1. Interacts with UBE2I. Interacts with XIRP2; the interaction is required for normal action potential configuration in the heart. In terms of processing, glycosylated. Sumoylated on Lys-212, and Lys-525, preferentially with SUMO3. Sumoylation regulates the voltage sensitivity of the channel. As to expression, expressed in the heart (at protein level). Expressed in the brain and weakly expressed in the thymus, skeletal muscle and spleen.

It localises to the cell membrane. The enzyme catalyses K(+)(in) = K(+)(out). Functionally, voltage-gated potassium channel that mediates transmembrane potassium transport in excitable membranes. Forms tetrameric potassium-selective channels through which potassium ions pass in accordance with their electrochemical gradient. The channel alternates between opened and closed conformations in response to the voltage difference across the membrane. Can form functional homotetrameric channels and heterotetrameric channels that contain variable proportions of KCNA1, KCNA2, KCNA4, KCNA5, and possibly other family members as well; channel properties depend on the type of alpha subunits that are part of the channel. Channel properties are modulated by cytoplasmic beta subunits that regulate the subcellular location of the alpha subunits and promote rapid inactivation. Homotetrameric channels display rapid activation and slow inactivation. Required for normal electrical conduction including formation of the infranodal ventricular conduction system and normal action potential configuration, as a result of its interaction with XIRP2. May play a role in regulating the secretion of insulin in normal pancreatic islets. Its function is as follows. Voltage-gated potassium channel that mediates transmembrane potassium transport in excitable membranes. Forms tetrameric potassium-selective channels through which potassium ions pass in accordance with their electrochemical gradient. The channel alternates between opened and closed conformations in response to the voltage difference across the membrane. Inactive. Inhibits expression of isoform 1 and isoform 2. In Mus musculus (Mouse), this protein is Potassium voltage-gated channel subfamily A member 5 (Kcna5).